Here is a 411-residue protein sequence, read N- to C-terminus: Translation initiation factor 2 subunit gamma (411 aa).

In terms of domain architecture, tr-type G spans 9–203; the sequence is QAEVNIGMVG…AIEDFIPTPK (195 aa). The tract at residues 18–25 is G1; that stretch reads GHVDHGKT. 4 residues coordinate Mg(2+): D21, T25, G46, and T48. Residue 21–26 coordinates GTP; it reads DHGKTT. The interval 46–50 is G2; it reads GITIK. Zn(2+) contacts are provided by C61, C64, C73, and C76. Residues 90–93 are G3; the sequence is DAPG. Residues 146–149 and 181–183 contribute to the GTP site; these read NKIE and SAL. Residues 146–149 form a G4 region; that stretch reads NKIE. Positions 181 to 183 are G5; sequence SAL.

This sequence belongs to the TRAFAC class translation factor GTPase superfamily. Classic translation factor GTPase family. EIF2G subfamily. In terms of assembly, heterotrimer composed of an alpha, a beta and a gamma chain. The cofactor is Mg(2+).

It carries out the reaction GTP + H2O = GDP + phosphate + H(+). In terms of biological role, eIF-2 functions in the early steps of protein synthesis by forming a ternary complex with GTP and initiator tRNA. In Pyrococcus abyssi (strain GE5 / Orsay), this protein is Translation initiation factor 2 subunit gamma.